Here is a 295-residue protein sequence, read N- to C-terminus: Ethanolamine ammonia-lyase small subunit (295 aa).

Adenosylcob(III)alamin contacts are provided by Val-207, Glu-228, and Cys-258.

Belongs to the EutC family. In terms of assembly, the basic unit is a heterodimer which dimerizes to form tetramers. The heterotetramers trimerize; 6 large subunits form a core ring with 6 small subunits projecting outwards. The cofactor is adenosylcob(III)alamin.

Its subcellular location is the bacterial microcompartment. The enzyme catalyses ethanolamine = acetaldehyde + NH4(+). The protein operates within amine and polyamine degradation; ethanolamine degradation. Functionally, catalyzes the deamination of various vicinal amino-alcohols to oxo compounds. Allows this organism to utilize ethanolamine as the sole source of nitrogen and carbon in the presence of external vitamin B12. This chain is Ethanolamine ammonia-lyase small subunit, found in Escherichia coli O7:K1 (strain IAI39 / ExPEC).